We begin with the raw amino-acid sequence, 343 residues long: L-lysine cyclodeaminase (343 aa).

The protein belongs to the ornithine cyclodeaminase/mu-crystallin family. NAD(+) is required as a cofactor.

The enzyme catalyses L-lysine = L-pipecolate + NH4(+). The protein operates within antibiotic biosynthesis. Its activity is regulated as follows. Inhibited by nipecotic acid and thiazolidine-2-carboxylic acid. Converts L-lysine to L-pipecolate, which is incorporated into multiple secondary metabolite products, including rapamycin, tobulysin, virginiamycin and pristinamycin. The chain is L-lysine cyclodeaminase (rapL) from Streptomyces rapamycinicus (strain ATCC 29253 / DSM 41530 / NRRL 5491 / AYB-994) (Streptomyces hygroscopicus (strain ATCC 29253)).